Consider the following 299-residue polypeptide: Apolipoprotein E (299 aa).

Residues 1 to 18 (MKVLCTVLVVTLLAGCRA) form the signal peptide. 7 consecutive repeat copies span residues 74–95 (VLMEDTMKAVKAYKSELEQELV), 96–117 (PMAEDTKARLSKELQAAQARLG), 118–139 (ADMEEVRNRLAQYRNEMQAMLG), 140–161 (QSADELRARLASHLRKLRKRML), 162–183 (RDAEDLQKRLAVYKDGASEGAE), 184–205 (RGVSAIRERLGSLVEQSRVRAA), and 224–245 (GRLEEVRGQAQDRLEEMREQME). Residues 74–245 (VLMEDTMKAV…RLEEMREQME (172 aa)) are 8 X 22 AA approximate tandem repeats. Methionine 137 carries the post-translational modification Methionine sulfoxide. Serine 141 is subject to Phosphoserine. The tract at residues 152 to 162 (HLRKLRKRMLR) is LDL and other lipoprotein receptors binding. 156–159 (LRKR) serves as a coordination point for heparin. Positions 204-273 (AALTGQPLQE…GWFEPMVEDM (70 aa)) are lipid-binding and lipoprotein association. 219–226 (GKQLRGRL) is a heparin binding site. The specificity for association with VLDL stretch occupies residues 261–273 (RLKGWFEPMVEDM).

The protein belongs to the apolipoprotein A1/A4/E family. As to quaternary structure, homotetramer. May interact with ABCA1; functionally associated with ABCA1 in the biogenesis of HDLs. May interact with APP/A4 amyloid-beta peptide; the interaction is extremely stable in vitro but its physiological significance is unclear. May interact with MAPT. May interact with MAP2. In the cerebrospinal fluid, interacts with secreted SORL1. Interacts with PMEL; this allows the loading of PMEL luminal fragment on ILVs to induce fibril nucleation. Post-translationally, APOE exists as multiple glycosylated and sialylated glycoforms within cells and in plasma. The extent of glycosylation and sialylation are tissue and context specific. Glycated in plasma VLDL. In terms of processing, phosphorylated by FAM20C in the extracellular medium.

It localises to the secreted. The protein resides in the extracellular space. Its subcellular location is the extracellular matrix. It is found in the extracellular vesicle. The protein localises to the endosome. It localises to the multivesicular body. APOE is an apolipoprotein, a protein associating with lipid particles, that mainly functions in lipoprotein-mediated lipid transport between organs via the plasma and interstitial fluids. APOE is a core component of plasma lipoproteins and is involved in their production, conversion and clearance. Apolipoproteins are amphipathic molecules that interact both with lipids of the lipoprotein particle core and the aqueous environment of the plasma. As such, APOE associates with chylomicrons, chylomicron remnants, very low density lipoproteins (VLDL) and intermediate density lipoproteins (IDL) but shows a preferential binding to high-density lipoproteins (HDL). It also binds a wide range of cellular receptors including the LDL receptor/LDLR, the LDL receptor-related proteins LRP1, LRP2 and LRP8 and the very low-density lipoprotein receptor/VLDLR that mediate the cellular uptake of the APOE-containing lipoprotein particles. Finally, APOE also has a heparin-binding activity and binds heparan-sulfate proteoglycans on the surface of cells, a property that supports the capture and the receptor-mediated uptake of APOE-containing lipoproteins by cells. A main function of APOE is to mediate lipoprotein clearance through the uptake of chylomicrons, VLDLs, and HDLs by hepatocytes. APOE is also involved in the biosynthesis by the liver of VLDLs as well as their uptake by peripheral tissues ensuring the delivery of triglycerides and energy storage in muscle, heart and adipose tissues. By participating in the lipoprotein-mediated distribution of lipids among tissues, APOE plays a critical role in plasma and tissues lipid homeostasis. APOE is also involved in two steps of reverse cholesterol transport, the HDLs-mediated transport of cholesterol from peripheral tissues to the liver, and thereby plays an important role in cholesterol homeostasis. First, it is functionally associated with ABCA1 in the biogenesis of HDLs in tissues. Second, it is enriched in circulating HDLs and mediates their uptake by hepatocytes. APOE also plays an important role in lipid transport in the central nervous system, regulating neuron survival and sprouting. This chain is Apolipoprotein E (APOE), found in Octodon degus (Degu).